Here is a 1233-residue protein sequence, read N- to C-terminus: MGFLKLIEIENFKSYKGRQIIGPFQRFTAIIGPNGSGKSNLMDAISFVLGEKTSNLRVKTLRDLIHGAPVGKPAANRAFVSMVYSEEGAEDRTFARVIVGGSSEYKINNKVVQLHEYSEELEKLGILIKARNFLVFQGAVESIAMKNPKERTALFEEISRSGELAQEYDKRKKEMVKAEEDTQFNYHRKKNIAAERKEAKQEKEEADRYQRLKDEVVRAQVQLQLFKLYHNEVEIEKLNKELASKNKEIEKDKKRMDKVEDELKEKKKELGKMMREQQQIEKEIKEKDSELNQKRPQYIKAKENTSHKIKKLEAAKKSLQNAQKHYKKRKGDMDELEKEMLSVEKARQEFEERMEEESQSQGRDLTLEENQVKKYHRLKEEASKRAATLAQELEKFNRDQKADQDRLDLEERKKVETEAKIKQKLREIEENQKRIEKLEEYITTSKQSLEEQKKLEGELTEEVEMAKRRIDEINKELNQVMEQLGDARIDRQESSRQQRKAEIMESIKRLYPGSVYGRLIDLCQPTQKKYQIAVTKVLGKNMDAIIVDSEKTGRDCIQYIKEQRGEPETFLPLDYLEVKPTDEKLRELKGAKLVIDVIRYEPPHIKKALQYACGNALVCDNVEDARRIAFGGHQRHKTVALDGTLFQKSGVISGGASDLKAKARRWDEKAVDKLKEKKERLTEELKEQMKAKRKEAELRQVQSQAHGLQMRLKYSQSDLEQTKTRHLALNLQEKSKLESELANFGPRINDIKRIIQSREREMKDLKEKMNQVEDEVFEEFCREIGVRNIREFEEEKVKRQNEIAKKRLEFENQKTRLGIQLDFEKNQLKEDQDKVHMWEQTVKKDENEIEKLKKEEQRHMKIIDETMAQLQDLKNQHLAKKSEVNDKNHEMEEIRKKLGGANKEMTHLQKEVTAIETKLEQKRSDRHNLLQACKMQDIKLPLSKGTMDDISQEEGSSQGEDSVSGSQRTSNIYAREALIEIDYGDLCEDLKDAQAEEEIKQEMNTLQQKLNEQQSVLQRIAAPNMKAMEKLESVRDKFQETSDEFEAARKRAKKAKQAFEQIKKERFDRFNACFESVATNIDEIYKALSRNSSAQAFLGPENPEEPYLDGINYNCVAPGKRFRPMDNLSGGEKTVAALALLFAIHSYKPAPFFVLDEIDAALDNTNIGKVANYIKEQSTCNFQAIVISLKEEFYTKAESLIGVYPEQGDCVISKVLTFDLTKYPDANPNPNEQ.

32–39 contacts ATP; that stretch reads GPNGSGKS. 2 coiled-coil regions span residues 104 to 124 and 163 to 503; these read EYKI…LEKL and ELAQ…KAEI. Positions 284-293 are enriched in basic and acidic residues; sequence IKEKDSELNQ. Disordered stretches follow at residues 284-308 and 348-369; these read IKEK…TSHK and QEFE…TLEE. A phosphoserine mark is found at serine 358 and serine 360. The region spanning 515-629 is the SMC hinge domain; it reads VYGRLIDLCQ…DNVEDARRIA (115 aa). Residues lysine 648 and lysine 713 each carry the N6-acetyllysine modification. Residues 660–935 are a coiled coil; that stretch reads KAKARRWDEK…RHNLLQACKM (276 aa). Residues 947–968 form a disordered region; the sequence is MDDISQEEGSSQGEDSVSGSQR. Residues 953 to 967 show a composition bias toward low complexity; that stretch reads EEGSSQGEDSVSGSQ. Residues serine 957, serine 962, serine 966, and serine 970 each carry the phosphoserine modification. Residues 991–1068 adopt a coiled-coil conformation; that stretch reads KDAQAEEEIK…FEQIKKERFD (78 aa). Lysine 1037 is subject to N6-acetyllysine.

The protein belongs to the SMC family. SMC1 subfamily. In terms of assembly, forms a heterodimer with SMC3 in cohesin complexes. Cohesin complexes are composed of the SMC1 (SMC1A or meiosis-specific SMC1B) and SMC3 heterodimer attached via their SMC hinge domain, RAD21 which link them, and one STAG protein (STAG1, STAG2 or meiosis-specific STAG3), which interacts with RAD21. In germ cell cohesin complexes, SMC1A is mutually exclusive with SMC1B. Found in a complex with CDCA5, SMC3 and RAD21, PDS5A/SCC-112 and PDS5B/APRIN. Interacts with NDC80, SYCP2, STAG3, BRCA1 and BRAT1. The cohesin complex interacts with the cohesin loading complex subunits NIPBL/Scc2 (via HEAT repeats) and MAU2/Scc4. NIPBL directly contacts all members of the complex, RAD21, SMC1A/B, SMC3 and STAG1. Interacts with RPGR. Found in a complex containing POLE and SMC3. In terms of processing, phosphorylated upon ionizing radiation or DNA methylation. Phosphorylation of Ser-957 and Ser-966 activates it and is required for S-phase checkpoint activation. Ubiquitinated by the DCX(DCAF15) complex, leading to its degradation.

The protein resides in the nucleus. It localises to the chromosome. The protein localises to the centromere. Its function is as follows. Involved in chromosome cohesion during cell cycle and in DNA repair. Involved in DNA repair via its interaction with BRCA1 and its related phosphorylation by ATM, and works as a downstream effector in the ATM/NBS1 branch of S-phase checkpoint. Central component of cohesin complex. The cohesin complex is required for the cohesion of sister chromatids after DNA replication. The cohesin complex apparently forms a large proteinaceous ring within which sister chromatids can be trapped. At anaphase, the complex is cleaved and dissociates from chromatin, allowing sister chromatids to segregate. The cohesin complex may also play a role in spindle pole assembly during mitosis. Involved in DNA repair via its interaction with BRCA1 and its related phosphorylation by ATM, or via its phosphorylation by ATR. Works as a downstream effector both in the ATM/NBS1 branch and in the ATR/MSH2 branch of S-phase checkpoint. This Bos taurus (Bovine) protein is Structural maintenance of chromosomes protein 1A (SMC1A).